The following is a 712-amino-acid chain: Polyribonucleotide nucleotidyltransferase (712 aa).

Mg(2+) contacts are provided by D485 and D491. The KH domain maps to 552–611 (PRIHTMKIDPKKIKDVIGKGGAVIRSLTEETGTSIDIDDDGTVKIAATDNNAAKMVMSRI). Residues 621 to 689 (NAIYTGKVSR…RQNRIRLTMK (69 aa)) form the S1 motif domain.

The protein belongs to the polyribonucleotide nucleotidyltransferase family. In terms of assembly, component of the RNA degradosome, which is a multiprotein complex involved in RNA processing and mRNA degradation. Mg(2+) is required as a cofactor.

The protein resides in the cytoplasm. The catalysed reaction is RNA(n+1) + phosphate = RNA(n) + a ribonucleoside 5'-diphosphate. Functionally, involved in mRNA degradation. Catalyzes the phosphorolysis of single-stranded polyribonucleotides processively in the 3'- to 5'-direction. The sequence is that of Polyribonucleotide nucleotidyltransferase from Haemophilus ducreyi (strain 35000HP / ATCC 700724).